We begin with the raw amino-acid sequence, 324 residues long: HTH-type transcriptional regulator CysB (324 aa).

The 59-residue stretch at 1–59 folds into the HTH lysR-type domain; it reads MKLQQLRYIVEVVNHNLNVSSTAEGLYTSQPGISKQVRMLEDELGIQIFSRSGKHLTQV. A DNA-binding region (H-T-H motif) is located at residues 19-38; it reads VSSTAEGLYTSQPGISKQVR.

It belongs to the LysR transcriptional regulatory family. In terms of assembly, homotetramer.

The protein resides in the cytoplasm. Its function is as follows. This protein is a positive regulator of gene expression for the cysteine regulon. The inducer for CysB is N-acetylserine. This is HTH-type transcriptional regulator CysB (cysB) from Escherichia coli O157:H7.